The chain runs to 559 residues: Asparagine--tRNA ligase, cytoplasmic (559 aa).

Ser-72 carries the phosphoserine modification. The interval 82–102 is disordered; it reads HREQMKNDSREKKEAEDNLRR. Position 255 is an N6-acetyllysine (Lys-255). Residue Ser-493 is modified to Phosphoserine. Lys-501 carries the post-translational modification N6-acetyllysine.

Belongs to the class-II aminoacyl-tRNA synthetase family. Homodimer.

Its subcellular location is the cytoplasm. It catalyses the reaction tRNA(Asn) + L-asparagine + ATP = L-asparaginyl-tRNA(Asn) + AMP + diphosphate + H(+). Functionally, catalyzes the attachment of asparagine to tRNA(Asn) in a two-step reaction: asparagine is first activated by ATP to form Asn-AMP and then transferred to the acceptor end of tRNA(Asn). In addition to its essential role in protein synthesis, acts as a signaling molecule that induced migration of CCR3-expressing cells. Has an essential role in the development of the cerebral cortex, being required for proper proliferation of radial glial cells. This Mus musculus (Mouse) protein is Asparagine--tRNA ligase, cytoplasmic.